The following is a 177-amino-acid chain: Large ribosomal subunit protein uL6 (177 aa).

It belongs to the universal ribosomal protein uL6 family. Part of the 50S ribosomal subunit.

In terms of biological role, this protein binds to the 23S rRNA, and is important in its secondary structure. It is located near the subunit interface in the base of the L7/L12 stalk, and near the tRNA binding site of the peptidyltransferase center. The chain is Large ribosomal subunit protein uL6 from Agrobacterium fabrum (strain C58 / ATCC 33970) (Agrobacterium tumefaciens (strain C58)).